The following is a 67-amino-acid chain: DNA-directed RNA polymerase subunit omega (67 aa).

This sequence belongs to the RNA polymerase subunit omega family. The RNAP catalytic core consists of 2 alpha, 1 beta, 1 beta' and 1 omega subunit. When a sigma factor is associated with the core the holoenzyme is formed, which can initiate transcription.

The catalysed reaction is RNA(n) + a ribonucleoside 5'-triphosphate = RNA(n+1) + diphosphate. Promotes RNA polymerase assembly. Latches the N- and C-terminal regions of the beta' subunit thereby facilitating its interaction with the beta and alpha subunits. This is DNA-directed RNA polymerase subunit omega from Bordetella avium (strain 197N).